A 329-amino-acid chain; its full sequence is MSSSREVIAELLWAEKYRPKTLDEIVDQEEIVSRLKQFVKERNMPHLLFAGPPGTGKTTAAHCLAHDLFGENYRQYMLELNASDERGIDVIRSKVKEFARTRVAANIPFKIVLLDEADNMTADAQQALRRLMEMYTATTRFILIANYPSKIIEPIQSRCAVFRFAPLKKEDVISRLKWIAEQEKVEIDEEALEAIHDLSEGDMRRAINILQAAAALGKVTVDSVYKVVGLAHPREIRQMIQLALAGNFNDAREKLRELMINYGLSGVDVIKQVHREIFSTDIKIPDEFKIIIADLAGEIQFRLVEGADDEIQLNAFLARLAFLGKKLKP.

51-58 (GPPGTGKT) contributes to the ATP binding site.

Belongs to the activator 1 small subunits family. RfcS subfamily. In terms of assembly, heteromultimer composed of small subunits (RfcS) and large subunits (RfcL).

Its function is as follows. Part of the RFC clamp loader complex which loads the PCNA sliding clamp onto DNA. In Staphylothermus marinus (strain ATCC 43588 / DSM 3639 / JCM 9404 / F1), this protein is Replication factor C small subunit.